The primary structure comprises 1399 residues: DNA-directed RNA polymerase subunit beta' (1399 aa).

Zn(2+) contacts are provided by Cys70, Cys72, Cys85, and Cys88. Mg(2+) contacts are provided by Asp460, Asp462, and Asp464. Residues Cys814, Cys888, Cys895, and Cys898 each coordinate Zn(2+).

Belongs to the RNA polymerase beta' chain family. The RNAP catalytic core consists of 2 alpha, 1 beta, 1 beta' and 1 omega subunit. When a sigma factor is associated with the core the holoenzyme is formed, which can initiate transcription. The cofactor is Mg(2+). It depends on Zn(2+) as a cofactor.

It carries out the reaction RNA(n) + a ribonucleoside 5'-triphosphate = RNA(n+1) + diphosphate. DNA-dependent RNA polymerase catalyzes the transcription of DNA into RNA using the four ribonucleoside triphosphates as substrates. The sequence is that of DNA-directed RNA polymerase subunit beta' from Pseudomonas syringae pv. syringae (strain B728a).